The chain runs to 94 residues: Co-chaperonin GroES (94 aa).

It belongs to the GroES chaperonin family. Heptamer of 7 subunits arranged in a ring. Interacts with the chaperonin GroEL.

Its subcellular location is the cytoplasm. Functionally, together with the chaperonin GroEL, plays an essential role in assisting protein folding. The GroEL-GroES system forms a nano-cage that allows encapsulation of the non-native substrate proteins and provides a physical environment optimized to promote and accelerate protein folding. GroES binds to the apical surface of the GroEL ring, thereby capping the opening of the GroEL channel. This chain is Co-chaperonin GroES, found in Anoxybacillus flavithermus (strain DSM 21510 / WK1).